Reading from the N-terminus, the 128-residue chain is Gene 39 protein (128 aa).

The chain is Gene 39 protein (39) from Mycobacterium (Mycobacteriophage D29).